The sequence spans 515 residues: Ribonuclease Y (515 aa).

Residues L6–G26 traverse the membrane as a helical segment. The KH domain occupies T205–I290. One can recognise an HD domain in the interval V331–S424.

Belongs to the RNase Y family.

The protein localises to the cell membrane. In terms of biological role, endoribonuclease that initiates mRNA decay. The protein is Ribonuclease Y of Syntrophomonas wolfei subsp. wolfei (strain DSM 2245B / Goettingen).